Consider the following 621-residue polypeptide: Threonine--tRNA ligase (621 aa).

An editing domain region spans residues 1–137; sequence MRILQLHCDS…ESSKVVTKDS (137 aa). The tract at residues 128–150 is disordered; the sequence is ESSKVVTKDSTTKDDDEDTSDAL. The tract at residues 202–501 is catalytic; sequence PHVALMKKLA…SKKGKKPQLP (300 aa). Residues Cys294, His346, and His470 each coordinate Zn(2+). Residues 598 to 612 show a composition bias toward polar residues; it reads QTSGKPYTGLNQSQH. Positions 598 to 621 are disordered; the sequence is QTSGKPYTGLNQSQHLSKRPQLMV.

It belongs to the class-II aminoacyl-tRNA synthetase family. As to quaternary structure, homodimer. The cofactor is Zn(2+).

The protein localises to the cytoplasm. It catalyses the reaction tRNA(Thr) + L-threonine + ATP = L-threonyl-tRNA(Thr) + AMP + diphosphate + H(+). Catalyzes the attachment of threonine to tRNA(Thr) in a two-step reaction: L-threonine is first activated by ATP to form Thr-AMP and then transferred to the acceptor end of tRNA(Thr). Also edits incorrectly charged L-seryl-tRNA(Thr). The chain is Threonine--tRNA ligase from Nitrosopumilus maritimus (strain SCM1).